The sequence spans 331 residues: Glycerol-3-phosphate dehydrogenase [NAD(P)+] (331 aa).

Positions 11 and 101 each coordinate NADPH. Residues Lys-101, Gly-132, and Ser-134 each coordinate sn-glycerol 3-phosphate. Ala-136 contacts NADPH. Sn-glycerol 3-phosphate-binding residues include Lys-188, Asp-241, Ser-251, Arg-252, and Asn-253. Lys-188 (proton acceptor) is an active-site residue. Arg-252 lines the NADPH pocket. Glu-278 is a binding site for NADPH.

Belongs to the NAD-dependent glycerol-3-phosphate dehydrogenase family.

Its subcellular location is the cytoplasm. It catalyses the reaction sn-glycerol 3-phosphate + NAD(+) = dihydroxyacetone phosphate + NADH + H(+). The enzyme catalyses sn-glycerol 3-phosphate + NADP(+) = dihydroxyacetone phosphate + NADPH + H(+). The protein operates within membrane lipid metabolism; glycerophospholipid metabolism. Its function is as follows. Catalyzes the reduction of the glycolytic intermediate dihydroxyacetone phosphate (DHAP) to sn-glycerol 3-phosphate (G3P), the key precursor for phospholipid synthesis. The polypeptide is Glycerol-3-phosphate dehydrogenase [NAD(P)+] (Phytoplasma mali (strain AT)).